Reading from the N-terminus, the 205-residue chain is Large ribosomal subunit protein uL18 (205 aa).

It belongs to the universal ribosomal protein uL18 family. Part of the 50S ribosomal subunit. Contacts the 5S and 23S rRNAs.

Functionally, this is one of the proteins that bind and probably mediate the attachment of the 5S RNA into the large ribosomal subunit, where it forms part of the central protuberance. The polypeptide is Large ribosomal subunit protein uL18 (Pyrobaculum arsenaticum (strain DSM 13514 / JCM 11321 / PZ6)).